Here is a 387-residue protein sequence, read N- to C-terminus: Homoserine O-succinyltransferase (387 aa).

Residues Asn45–Leu354 enclose the AB hydrolase-1 domain. Ser151 serves as the catalytic Nucleophile. Position 221 (Arg221) interacts with substrate. Residues Asp317 and His350 contribute to the active site. Residue Asp351 coordinates substrate.

Belongs to the AB hydrolase superfamily. MetX family. As to quaternary structure, homodimer.

The protein resides in the cytoplasm. It carries out the reaction L-homoserine + succinyl-CoA = O-succinyl-L-homoserine + CoA. The protein operates within amino-acid biosynthesis; L-methionine biosynthesis via de novo pathway; O-succinyl-L-homoserine from L-homoserine: step 1/1. Its function is as follows. Transfers a succinyl group from succinyl-CoA to L-homoserine, forming succinyl-L-homoserine. The polypeptide is Homoserine O-succinyltransferase (Methylibium petroleiphilum (strain ATCC BAA-1232 / LMG 22953 / PM1)).